Consider the following 253-residue polypeptide: tRNA pseudouridine synthase A (253 aa).

The active-site Nucleophile is the D53. Y112 is a substrate binding site.

This sequence belongs to the tRNA pseudouridine synthase TruA family. In terms of assembly, homodimer.

The enzyme catalyses uridine(38/39/40) in tRNA = pseudouridine(38/39/40) in tRNA. Functionally, formation of pseudouridine at positions 38, 39 and 40 in the anticodon stem and loop of transfer RNAs. In Lactococcus lactis subsp. lactis (strain IL1403) (Streptococcus lactis), this protein is tRNA pseudouridine synthase A.